Here is a 425-residue protein sequence, read N- to C-terminus: Glutamate-1-semialdehyde 2,1-aminomutase (425 aa).

Lys265 is subject to N6-(pyridoxal phosphate)lysine.

This sequence belongs to the class-III pyridoxal-phosphate-dependent aminotransferase family. HemL subfamily. In terms of assembly, homodimer. The cofactor is pyridoxal 5'-phosphate.

The protein resides in the cytoplasm. It carries out the reaction (S)-4-amino-5-oxopentanoate = 5-aminolevulinate. Its pathway is porphyrin-containing compound metabolism; protoporphyrin-IX biosynthesis; 5-aminolevulinate from L-glutamyl-tRNA(Glu): step 2/2. This chain is Glutamate-1-semialdehyde 2,1-aminomutase, found in Psychromonas ingrahamii (strain DSM 17664 / CCUG 51855 / 37).